The sequence spans 332 residues: Fructose-1,6-bisphosphatase class 1 (332 aa).

E89, D110, L112, and D113 together coordinate Mg(2+). Substrate-binding positions include 113-116 (DGSS), N206, Y239, 257-259 (YLY), and K269. E275 contributes to the Mg(2+) binding site.

The protein belongs to the FBPase class 1 family. As to quaternary structure, homotetramer. Requires Mg(2+) as cofactor.

Its subcellular location is the cytoplasm. The catalysed reaction is beta-D-fructose 1,6-bisphosphate + H2O = beta-D-fructose 6-phosphate + phosphate. It functions in the pathway carbohydrate biosynthesis; gluconeogenesis. The chain is Fructose-1,6-bisphosphatase class 1 from Citrobacter koseri (strain ATCC BAA-895 / CDC 4225-83 / SGSC4696).